The following is a 106-amino-acid chain: Colipase A (106 aa).

The signal sequence occupies residues 1–11 (LLLVALAVAYA). Residues 12–16 (VPDPR) constitute a propeptide, enterostatin, activation peptide. Disulfide bonds link cysteine 28-cysteine 39, cysteine 34-cysteine 50, cysteine 38-cysteine 72, cysteine 60-cysteine 80, and cysteine 74-cysteine 98. Position 63 (tryptophan 63) interacts with taurodeoxycholate.

The protein belongs to the colipase family. Forms a 1:1 stoichiometric complex with pancreatic lipase. As to expression, expressed by the pancreas.

Its subcellular location is the secreted. Functionally, colipase is a cofactor of pancreatic lipase. It allows the lipase to anchor itself to the lipid-water interface. Without colipase the enzyme is washed off by bile salts, which have an inhibitory effect on the lipase. Its function is as follows. Enterostatin has a biological activity as a satiety signal. This chain is Colipase A (CLPS1), found in Equus caballus (Horse).